The primary structure comprises 83 residues: Small ribosomal subunit protein bS16 (83 aa).

Belongs to the bacterial ribosomal protein bS16 family.

The chain is Small ribosomal subunit protein bS16 from Pseudomonas entomophila (strain L48).